The following is a 318-amino-acid chain: NADH-ubiquinone oxidoreductase chain 1 (318 aa).

Transmembrane regions (helical) follow at residues 2–22 (PVINLLLLTMSILIAMAFLML), 69–89 (ILYIVSPALALTIALLLWTPL), 100–120 (LGLLFILATSSLTVYSILWSG), 146–166 (LALILLSVLLMSGSFNLSTLI), 171–191 (HSWLLLPSWPLALMWFISTLA), 222–242 (LFFMAEYTNIILMNALTAMIF), 253–273 (ELHTTLFTIKTLLLTSLFLWI), and 294–314 (LPLTLALLMWHISMPITTSGI).

This sequence belongs to the complex I subunit 1 family. In terms of assembly, core subunit of respiratory chain NADH dehydrogenase (Complex I) which is composed of 45 different subunits.

It localises to the mitochondrion inner membrane. The enzyme catalyses a ubiquinone + NADH + 5 H(+)(in) = a ubiquinol + NAD(+) + 4 H(+)(out). Functionally, core subunit of the mitochondrial membrane respiratory chain NADH dehydrogenase (Complex I) which catalyzes electron transfer from NADH through the respiratory chain, using ubiquinone as an electron acceptor. Essential for the catalytic activity and assembly of complex I. The sequence is that of NADH-ubiquinone oxidoreductase chain 1 (MT-ND1) from Pongo pygmaeus (Bornean orangutan).